The sequence spans 58 residues: UPF0339 protein MA_3316 (58 aa).

Belongs to the UPF0339 family.

This Methanosarcina acetivorans (strain ATCC 35395 / DSM 2834 / JCM 12185 / C2A) protein is UPF0339 protein MA_3316.